Consider the following 246-residue polypeptide: Homeobox protein Crxos (246 aa).

2 DNA-binding regions (homeobox) span residues Trp-22–Pro-72 and Glu-129–Arg-182. The Nuclear localization signal signature appears at Arg-163–Arg-177.

Belongs to the paired homeobox family. In terms of tissue distribution, specifically expressed during the preimplantation stages of embryonic development, between the four-cell to eight-cell stage and the morula stage. Expressed in adult testis. Detected in early embryos; expression decreases gradually with embryonic development. Also expressed in extraembryonic tissues after E14.5, expression level increases drastically until E18.5, immediately before partum.

The protein resides in the nucleus. Its function is as follows. Transcription factor that acts as a regulator of embryonic stem cell differentiation during the preimplantation stages of embryonic development. Functionally, transcription factor that acts as a positive regulator of embryonic stem cell differentiation. In terms of biological role, transcription factor that promotes embryonic stem cell pluripotency. Transcription factor that promotes embryonic stem cell pluripotency. Also involved in extraembryonic tissues development by promoting the expression of placental prolactin family genes. This chain is Homeobox protein Crxos, found in Mus musculus (Mouse).